The following is a 145-amino-acid chain: Bacilliredoxin SH1401 (145 aa).

This sequence belongs to the bacilliredoxin family.

This is Bacilliredoxin SH1401 from Staphylococcus haemolyticus (strain JCSC1435).